The sequence spans 279 residues: 2-dehydro-3-deoxyphosphooctonate aldolase (279 aa).

Belongs to the KdsA family.

It localises to the cytoplasm. It carries out the reaction D-arabinose 5-phosphate + phosphoenolpyruvate + H2O = 3-deoxy-alpha-D-manno-2-octulosonate-8-phosphate + phosphate. It participates in carbohydrate biosynthesis; 3-deoxy-D-manno-octulosonate biosynthesis; 3-deoxy-D-manno-octulosonate from D-ribulose 5-phosphate: step 2/3. The protein operates within bacterial outer membrane biogenesis; lipopolysaccharide biosynthesis. The polypeptide is 2-dehydro-3-deoxyphosphooctonate aldolase (Desulfosudis oleivorans (strain DSM 6200 / JCM 39069 / Hxd3) (Desulfococcus oleovorans)).